The following is a 395-amino-acid chain: ATP phosphoribosyltransferase regulatory subunit (395 aa).

Belongs to the class-II aminoacyl-tRNA synthetase family. HisZ subfamily. Heteromultimer composed of HisG and HisZ subunits.

The protein resides in the cytoplasm. It functions in the pathway amino-acid biosynthesis; L-histidine biosynthesis; L-histidine from 5-phospho-alpha-D-ribose 1-diphosphate: step 1/9. Required for the first step of histidine biosynthesis. May allow the feedback regulation of ATP phosphoribosyltransferase activity by histidine. This Pseudomonas fluorescens (strain Pf0-1) protein is ATP phosphoribosyltransferase regulatory subunit.